The following is a 594-amino-acid chain: UvrABC system protein C (594 aa).

One can recognise a GIY-YIG domain in the interval 13-99; it reads NSSGVYQYFD…IKQLKPKYNI (87 aa). The 36-residue stretch at 205–240 folds into the UVR domain; that stretch reads DRLIKELELKMERLSNNLRFEEALIYRDRIAKIQKI.

Belongs to the UvrC family. As to quaternary structure, interacts with UvrB in an incision complex.

The protein localises to the cytoplasm. The UvrABC repair system catalyzes the recognition and processing of DNA lesions. UvrC both incises the 5' and 3' sides of the lesion. The N-terminal half is responsible for the 3' incision and the C-terminal half is responsible for the 5' incision. This Helicobacter pylori (strain ATCC 700392 / 26695) (Campylobacter pylori) protein is UvrABC system protein C.